The sequence spans 196 residues: Small ribosomal subunit protein uS4c (196 aa).

In terms of domain architecture, S4 RNA-binding spans 89–169 (MRLDNIIFRL…LPKHLTIDTV (81 aa)).

This sequence belongs to the universal ribosomal protein uS4 family. As to quaternary structure, part of the 30S ribosomal subunit. Contacts protein S5. The interaction surface between S4 and S5 is involved in control of translational fidelity.

The protein localises to the plastid. It is found in the chloroplast. One of the primary rRNA binding proteins, it binds directly to 16S rRNA where it nucleates assembly of the body of the 30S subunit. Its function is as follows. With S5 and S12 plays an important role in translational accuracy. The polypeptide is Small ribosomal subunit protein uS4c (rps4) (Stipellula capensis (Cape rice grass)).